The following is a 325-amino-acid chain: uncharacterized protein (325 aa).

The first 26 residues, 1 to 26 (MQGRVAGSCAPLGLLLVCLHLPGLFA), serve as a signal peptide directing secretion. A compositionally biased stretch (polar residues) spans 41–60 (GTNLPQLGQPSSTGPSNSEH). 2 disordered regions span residues 41-110 (GTNL…MDSW) and 147-189 (GSGP…AGGK). A compositionally biased stretch (low complexity) spans 147-157 (GSGPLPGESSP).

Binds to numerous extracellular matrix proteins. Expressed in skin and tonsils.

The protein localises to the secreted. It is found in the extracellular space. It localises to the extracellular matrix. This is an uncharacterized protein from Homo sapiens (Human).